Here is a 217-residue protein sequence, read N- to C-terminus: GrpE protein homolog 1, mitochondrial (217 aa).

The transit peptide at 1 to 27 (MAARCVRLARGSLPAFALSLRSSPRLL) directs the protein to the mitochondrion. Lysine 94 carries the post-translational modification N6-acetyllysine; alternate. Lysine 94 carries the N6-succinyllysine; alternate modification. Lysine 100 bears the N6-acetyllysine mark. Lysine 120 carries the post-translational modification N6-succinyllysine. Lysine 215 carries the post-translational modification N6-acetyllysine; alternate. An N6-succinyllysine; alternate modification is found at lysine 215.

Belongs to the GrpE family. In terms of assembly, probable component of the PAM complex at least composed of a mitochondrial HSP70 protein, GRPEL1 or GRPEL2, TIMM44, TIMM16/PAM16 and TIMM14/DNAJC19. Binds to HSP70, HSC70 and HSJ1B.

The protein localises to the mitochondrion matrix. In terms of biological role, essential component of the PAM complex, a complex required for the translocation of transit peptide-containing proteins from the inner membrane into the mitochondrial matrix in an ATP-dependent manner. Seems to control the nucleotide-dependent binding of mitochondrial HSP70 to substrate proteins. In Bos taurus (Bovine), this protein is GrpE protein homolog 1, mitochondrial (GRPEL1).